The sequence spans 227 residues: PKHD-type hydroxylase BamMC406_4714 (227 aa).

The 101-residue stretch at Lys78 to Ser178 folds into the Fe2OG dioxygenase domain. Residues His96, Asp98, and His159 each coordinate Fe cation. Arg169 is a 2-oxoglutarate binding site.

The cofactor is Fe(2+). L-ascorbate is required as a cofactor.

This chain is PKHD-type hydroxylase BamMC406_4714, found in Burkholderia ambifaria (strain MC40-6).